Consider the following 473-residue polypeptide: Catalase easC (473 aa).

The segment covering 1-15 has biased composition (low complexity); the sequence is MASEVSVASSGSEHS. The tract at residues 1-31 is disordered; the sequence is MASEVSVASSGSEHSGAQKCPFQDPGLSSMD. Histidine 54 is a catalytic residue. Tyrosine 344 is a binding site for heme. Residues 369-388 are disordered; sequence DGARPEKAEMAPQKVPSQEH.

The protein belongs to the catalase family. It depends on heme as a cofactor.

Its pathway is alkaloid biosynthesis; ergot alkaloid biosynthesis. Functionally, catalase; part of the gene cluster that mediates the biosynthesis of fungal ergot alkaloid. DmaW catalyzes the first step of ergot alkaloid biosynthesis by condensing dimethylallyl diphosphate (DMAP) and tryptophan to form 4-dimethylallyl-L-tryptophan. The second step is catalyzed by the methyltransferase easF that methylates 4-dimethylallyl-L-tryptophan in the presence of S-adenosyl-L-methionine, resulting in the formation of 4-dimethylallyl-L-abrine. The catalase easC and the FAD-dependent oxidoreductase easE then transform 4-dimethylallyl-L-abrine to chanoclavine-I which is further oxidized by easD in the presence of NAD(+), resulting in the formation of chanoclavine-I aldehyde. Agroclavine dehydrogenase easG then mediates the conversion of chanoclavine-I aldehyde to agroclavine via a non-enzymatic adduct reaction: the substrate is an iminium intermediate that is formed spontaneously from chanoclavine-I aldehyde in the presence of glutathione. The presence of easA is not required to complete this reaction. Further conversion of agroclavine to paspalic acid is a two-step process involving oxidation of agroclavine to elymoclavine and of elymoclavine to paspalic acid, the second step being performed by the elymoclavine oxidase cloA. Paspalic acid is then further converted to D-lysergic acid. Ergopeptines are assembled from D-lysergic acid and three different amino acids by the D-lysergyl-peptide-synthetases composed each of a monomudular and a trimodular nonribosomal peptide synthetase subunit. LpsB and lpsC encode the monomodular subunits responsible for D-lysergic acid activation and incorporation into the ergopeptine backbone. LpsA1 and A2 subunits encode the trimodular nonribosomal peptide synthetase assembling the tripeptide portion of ergopeptines. LpsA1 is responsible for formation of the major ergopeptine, ergotamine, and lpsA2 for alpha-ergocryptine, the minor ergopeptine of the total alkaloid mixture elaborated by C.purpurea. D-lysergyl-tripeptides are assembled by the nonribosomal peptide synthetases and released as N-(D-lysergyl-aminoacyl)-lactams. Cyclolization of the D-lysergyl-tripeptides is performed by the Fe(2+)/2-ketoglutarate-dependent dioxygenase easH which introduces a hydroxyl group into N-(D-lysergyl-aminoacyl)-lactam at alpha-C of the aminoacyl residue followed by spontaneous condensation with the terminal lactam carbonyl group. This chain is Catalase easC, found in Claviceps purpurea (Ergot fungus).